The primary structure comprises 148 residues: Small ribosomal subunit protein uS15 (148 aa).

Belongs to the universal ribosomal protein uS15 family.

This is Small ribosomal subunit protein uS15 (RPS13) from Encephalitozoon cuniculi (strain GB-M1) (Microsporidian parasite).